The chain runs to 370 residues: Elongation factor Ts, mitochondrial (370 aa).

The transit peptide at 1–29 (MALLSAAPRALRLPRRLPLGAALPALRAL) directs the protein to the mitochondrion.

Belongs to the EF-Ts family.

Its subcellular location is the mitochondrion. In terms of biological role, associates with the EF-Tu.GDP complex and induces the exchange of GDP to GTP. It remains bound to the aminoacyl-tRNA.EF-Tu.GTP complex up to the GTP hydrolysis stage on the ribosome. This is Elongation factor Ts, mitochondrial from Cryptococcus neoformans var. neoformans serotype D (strain B-3501A) (Filobasidiella neoformans).